The chain runs to 238 residues: Opacity protein opA66 (238 aa).

Residue A1 is a signal peptide. Disordered regions lie at residues 88–109 and 162–183; these read NLQR…QENG and GARG…AHQE. Over residues 168 to 183 the composition is skewed to polar residues; it reads PTVSSPYKNTQDAHQE.

Belongs to the opacity porin family.

The protein resides in the cell outer membrane. Functionally, implicated in a number of adherence functions. OPA proteins are implicated in pathogenesis and are subject to phase variation. The polypeptide is Opacity protein opA66 (Neisseria gonorrhoeae).